A 397-amino-acid polypeptide reads, in one-letter code: Elongation factor Tu (397 aa).

The tr-type G domain maps to 10-207 (KPHVNIGTIG…AVDESIPDPV (198 aa)). The segment at 19-26 (GHVDHGKT) is G1. Residue 19–26 (GHVDHGKT) coordinates GTP. T26 is a binding site for Mg(2+). The G2 stretch occupies residues 63–67 (GITIN). Residues 84–87 (DAPG) are G3. GTP contacts are provided by residues 84-88 (DAPGH) and 139-142 (NKAD). A G4 region spans residues 139 to 142 (NKAD). The interval 177-179 (SGL) is G5.

Belongs to the TRAFAC class translation factor GTPase superfamily. Classic translation factor GTPase family. EF-Tu/EF-1A subfamily. In terms of assembly, monomer.

It localises to the cytoplasm. It catalyses the reaction GTP + H2O = GDP + phosphate + H(+). Functionally, GTP hydrolase that promotes the GTP-dependent binding of aminoacyl-tRNA to the A-site of ribosomes during protein biosynthesis. The polypeptide is Elongation factor Tu (Tropheryma whipplei (strain TW08/27) (Whipple's bacillus)).